A 238-amino-acid chain; its full sequence is uncharacterized protein (238 aa).

The segment at 219-238 (EESINNNVDDTDDIDNDNFI) is disordered. Acidic residues predominate over residues 227 to 238 (DDTDDIDNDNFI).

This is an uncharacterized protein from Buchnera aphidicola subsp. Acyrthosiphon pisum (strain APS) (Acyrthosiphon pisum symbiotic bacterium).